A 546-amino-acid polypeptide reads, in one-letter code: (-)-5-epieremophilene synthase STPS3 (546 aa).

Residues aspartate 299, aspartate 303, aspartate 442, threonine 446, and glutamate 450 each contribute to the Mg(2+) site. The DDXXD motif signature appears at 299–303 (DDTYD).

Belongs to the terpene synthase family. Tpsa subfamily. In terms of assembly, monomer. It depends on Mg(2+) as a cofactor. In terms of tissue distribution, highly expressed in flowers and at lower levels in leaves.

The enzyme catalyses (2E,6E)-farnesyl diphosphate = (-)-5-epi-eremophilene + diphosphate. It participates in secondary metabolite biosynthesis; terpenoid biosynthesis. Its function is as follows. Sesquiterpene synthase that catalyzes the conversion of farnesyl diphosphate to (-)-5-epi-eremophilene. The protein is (-)-5-epieremophilene synthase STPS3 of Salvia miltiorrhiza (Chinese sage).